A 371-amino-acid polypeptide reads, in one-letter code: Mannonate dehydratase (371 aa).

It belongs to the mannonate dehydratase family. Requires Fe(2+) as cofactor. It depends on Mn(2+) as a cofactor.

It carries out the reaction D-mannonate = 2-dehydro-3-deoxy-D-gluconate + H2O. It functions in the pathway carbohydrate metabolism; pentose and glucuronate interconversion. Catalyzes the dehydration of D-mannonate. In Geobacillus thermodenitrificans (strain NG80-2), this protein is Mannonate dehydratase.